The chain runs to 338 residues: Cytosolic sulfotransferase 16 (338 aa).

81-86 (KTGTTW) contributes to the 3'-phosphoadenylyl sulfate binding site. Catalysis depends on His143, which acts as the Proton acceptor. Residues Arg165, Ser173, Tyr231, and 301–303 (RKG) each bind 3'-phosphoadenylyl sulfate.

It belongs to the sulfotransferase 1 family. Highly expressed in roots, stems and mature leaves. Low expression in young leaves and flowers. Barely detected in siliques.

The protein localises to the cytoplasm. It carries out the reaction (Z)-desulfoglucotropeolin + 3'-phosphoadenylyl sulfate = (Z)-glucotropeolin + adenosine 3',5'-bisphosphate + H(+). The enzyme catalyses (Z)-indolylmethyl desulfoglucosinolate + 3'-phosphoadenylyl sulfate = (Z)-glucobrassicin + adenosine 3',5'-bisphosphate + H(+). Inhibited by phosphoadenosine 5'-phosphate (PAP). Sulfotransferase that utilizes 3'-phospho-5'-adenylyl sulfate (PAPS) as sulfonate donor to catalyze the sulfate conjugation of desulfo-glucosinolates (dsGSs), the final step in the biosynthesis of the glucosinolate core structure. Substrate preference is desulfo-2-phenylethyl glucosinolate &gt; desulfo-indol-3-yl methyl glucosinolate &gt; desulfo-benzyl glucosinolate &gt; desulfo-6-methylthiohexyl glucosinolate &gt; desulfo-4-methylthiobutyl glucosinolate &gt; desulfo-3-methylthiopropyl glucosinolate &gt; desulfo-singrin &gt; desulfo-3-butenyl glucosinolate. In Arabidopsis thaliana (Mouse-ear cress), this protein is Cytosolic sulfotransferase 16 (SOT16).